Reading from the N-terminus, the 285-residue chain is Vacuolar protein sorting-associated protein 37B (285 aa).

The tract at residues 50-170 is interaction with IST1; that stretch reads ASNRSLAEGN…ELVLKGQRHP (121 aa). Positions 84–173 constitute a VPS37 C-terminal domain; it reads FEAYQIKKTK…LKGQRHPQAG (90 aa). 2 disordered regions span residues 167 to 215 and 242 to 285; these read QRHP…PPVP and PLPP…FILQ. Composition is skewed to pro residues over residues 173-184 and 206-215; these read GAPPPPRVPEPS and RIPPPPPPVP. The segment covering 250 to 259 has biased composition (polar residues); it reads PSQQGFSAQL. Residues 262 to 275 show a composition bias toward pro residues; sequence PYPPALPQRPPPRM. Positions 276 to 285 are enriched in low complexity; the sequence is APHQPGFILQ.

This sequence belongs to the VPS37 family. In terms of assembly, component of the ESCRT-I complex (endosomal sorting complex required for transport I) which consists of TSG101, VPS28, a VPS37 protein (VPS37A to -D) and MVB12A or MVB12B in a 1:1:1:1 stoichiometry. Interacts with TSG101, VPS28, MVB12A and MVB12B. Component of the ESCRT-I complex (endosomal sorting complex required for transport I) which consists of TSG101, VPS28, a VPS37 protein (VPS37A to -D) and UBAP1 in a 1:1:1:1 stoichiometry. Interacts with CEP55. Interacts with IST1.

It is found in the late endosome membrane. In terms of biological role, component of the ESCRT-I complex, a regulator of vesicular trafficking process. Required for the sorting of endocytic ubiquitinated cargos into multivesicular bodies. May be involved in cell growth and differentiation. The sequence is that of Vacuolar protein sorting-associated protein 37B (Vps37b) from Mus musculus (Mouse).